The primary structure comprises 812 residues: Protein FAM83G (812 aa).

Position 2 is an N-acetylalanine (Ala-2). Residues Ala-2–Leu-312 form a DUF1669 region. The residue at position 4 (Ser-4) is a Phosphoserine. Residues Pro-76–Tyr-119 are disordered. A compositionally biased stretch (basic and acidic residues) spans Glu-79–Pro-90. A phosphoserine mark is found at Ser-124, Ser-127, and Ser-356. Disordered stretches follow at residues Lys-362–Ser-389, Ala-455–Thr-509, and Ser-521–Pro-812. Residues Ala-455–Gly-467 are compositionally biased toward polar residues. Positions Cys-471 to Pro-480 are enriched in pro residues. Positions Ser-545–Gln-562 are enriched in polar residues. Over residues Leu-576–Tyr-586 the composition is skewed to acidic residues. Residues Leu-589–Ser-598 show a composition bias toward low complexity. Residues Ser-609, Ser-613, Ser-615, and Ser-649 each carry the phosphoserine modification. The span at Ser-721–Ala-731 shows a compositional bias: low complexity. Basic and acidic residues predominate over residues Leu-761 to Ala-772.

It belongs to the FAM83 family. As to quaternary structure, interacts with SMAD1 (via MH2 domain); in a SMAD4-independent manner. Directly interacts (via DUF1669) with casein kinase isoforms CSNK1A1 and CSNK1A1L. In terms of processing, BMP signaling induces the phosphorylation by BMPR1A at Ser-609, Ser-613 and Ser-615. Phosphorylation at Ser-609 is necessary for the activation of SMAD4-independent BMP target genes such as NEDD9 and ASNS. Post-translationally, phosphorylated by CSNK1A1.

The protein resides in the cytoplasm. It is found in the cytosol. It localises to the nucleus. Functionally, substrate for type I BMP receptor kinase involved in regulation of some target genes of the BMP signaling pathway. Also regulates the expression of several non-BMP target genes, suggesting a role in other signaling pathways. This is Protein FAM83G (Fam83g) from Mus musculus (Mouse).